An 88-amino-acid polypeptide reads, in one-letter code: MKIKPLKDRVVVKFSSEELEKTPGGIYVPDVAKEKPQKGTVVEIGSEVKEVKVGDTVLFDKYAGSKIKVDDVEYLIIKEEEILGIVEK.

This sequence belongs to the GroES chaperonin family. Heptamer of 7 subunits arranged in a ring. Interacts with the chaperonin GroEL.

It localises to the cytoplasm. Together with the chaperonin GroEL, plays an essential role in assisting protein folding. The GroEL-GroES system forms a nano-cage that allows encapsulation of the non-native substrate proteins and provides a physical environment optimized to promote and accelerate protein folding. GroES binds to the apical surface of the GroEL ring, thereby capping the opening of the GroEL channel. This is Co-chaperonin GroES from Thermodesulfovibrio yellowstonii (strain ATCC 51303 / DSM 11347 / YP87).